The sequence spans 122 residues: Small ribosomal subunit protein uS13 (122 aa).

The disordered stretch occupies residues Gly95–Lys122.

The protein belongs to the universal ribosomal protein uS13 family. As to quaternary structure, part of the 30S ribosomal subunit. Forms a loose heterodimer with protein S19. Forms two bridges to the 50S subunit in the 70S ribosome.

Located at the top of the head of the 30S subunit, it contacts several helices of the 16S rRNA. In the 70S ribosome it contacts the 23S rRNA (bridge B1a) and protein L5 of the 50S subunit (bridge B1b), connecting the 2 subunits; these bridges are implicated in subunit movement. Contacts the tRNAs in the A and P-sites. This Sphingopyxis alaskensis (strain DSM 13593 / LMG 18877 / RB2256) (Sphingomonas alaskensis) protein is Small ribosomal subunit protein uS13.